A 616-amino-acid chain; its full sequence is Chaperone protein HscA (616 aa).

The protein belongs to the heat shock protein 70 family.

Functionally, chaperone involved in the maturation of iron-sulfur cluster-containing proteins. Has a low intrinsic ATPase activity which is markedly stimulated by HscB. Involved in the maturation of IscU. In Citrobacter koseri (strain ATCC BAA-895 / CDC 4225-83 / SGSC4696), this protein is Chaperone protein HscA.